A 125-amino-acid chain; its full sequence is Profilin-P (125 aa).

An N-acetylserine modification is found at Ser2.

The protein belongs to the profilin family. As to quaternary structure, occurs in many kinds of cells as a complex with monomeric actin in a 1:1 ratio.

The protein resides in the cytoplasm. It is found in the cytoskeleton. Binds to actin and affects the structure of the cytoskeleton. At high concentrations, profilin prevents the polymerization of actin, whereas it enhances it at low concentrations. By binding to PIP2, it inhibits the formation of IP3 and DG. The polypeptide is Profilin-P (PROP) (Physarum polycephalum (Slime mold)).